We begin with the raw amino-acid sequence, 88 residues long: Small ribosomal subunit protein bS16c (88 aa).

This sequence belongs to the bacterial ribosomal protein bS16 family.

The protein localises to the plastid. It is found in the chloroplast. This is Small ribosomal subunit protein bS16c from Helianthus annuus (Common sunflower).